Consider the following 497-residue polypeptide: FAD-linked oxidoreductase fmqD (497 aa).

The signal sequence occupies residues 1–17; it reads MQYIPFLISGLVPVALS. The FAD-binding PCMH-type domain occupies 68–243; sequence NDPSYVATVK…TSATYRIYDQ (176 aa). Residues Asn99, Asn261, and Asn288 are each glycosylated (N-linked (GlcNAc...) asparagine).

This sequence belongs to the oxygen-dependent FAD-linked oxidoreductase family.

It localises to the secreted. Its subcellular location is the cell wall. Its pathway is alkaloid biosynthesis. In terms of biological role, FAD-linked oxidoreductase; part of the gene cluster that mediates the biosynthesis of the antitumor fumiquinazolines that confer a dual-usage capability to defend against phagocytes in the environment and animal hosts. The simplest member is fumiquinazoline F (FQF) with a 6-6-6 tricyclic core derived from anthranilic acid (Ant), tryptophan (Trp), and alanine (Ala). The trimodular NRPS fmqA is responsible for FQF formation. Modules 1, 2 and 3 of fmqA are predicted to activate and load Ant, Trp and Ala, respectively, providing for the assembly of an Ant-Trp-Ala-S-enzyme intermediate that would undergo double cyclization for chain release and generation of the tricyclic 6-6-6 product fumiquinazoline F. The presence of an E domain predicted for module 2 of fmqA is consistent with epimerization of L-Trp to D-Trp during assembly to generate the R-stereocenter at C14 of FQF. The FAD-dependent monooxygenase fmqB and the monomodular NRPS fmqC then maturate FQF to FQA. FmqB oxidizes the 2',3'-double bond of the indole side chain of FQF, and fmqC activates L-Ala as the adenylate, installs it as the pantetheinyl thioester on its carrier protein domain, and acylates the oxidized indole for subsequent intramolecular cyclization to create the 6-5-5-imidazolindolone of FQA. The FAD-linked oxidoreductase fmqD introduces a third layer of scaffold complexity by converting FQA to the spirohemiaminal FQC, presumably by catalyzing the formation of a transient imine within the pyrazinone ring. FQC subsequently converts nonenzymatically to the known cyclic aminal FQD. This is FAD-linked oxidoreductase fmqD from Aspergillus fumigatus (strain ATCC MYA-4609 / CBS 101355 / FGSC A1100 / Af293) (Neosartorya fumigata).